A 364-amino-acid polypeptide reads, in one-letter code: Transcriptional regulator ICP22 homolog (364 aa).

2 disordered regions span residues 1–73 (MDRV…HGAR) and 173–364 (VIEG…AAAP). Positions 12–46 (VPSPPFSPVDPPGPRPTTPVPGSSPPSPASTPTPP) are enriched in pro residues. Acidic residues-rich tracts occupy residues 181–191 (EECDVDEDDAG), 207–286 (CEDD…DGSD), and 294–343 (DGGD…GEGE). Positions 355-364 (RAPTRPAAAP) are enriched in low complexity.

Belongs to the herpesviridae ICP22 family.

This is Transcriptional regulator ICP22 homolog (RSP40) from Sus scrofa (Pig).